A 60-amino-acid polypeptide reads, in one-letter code: Lantibiotic Pep5 (60 aa).

Residues 1-26 (MKNNKNLFDLEIKKETSQNTDELEPQ) constitute a propeptide that is removed on maturation. The tract at residues 1 to 29 (MKNNKNLFDLEIKKETSQNTDELEPQTAG) is disordered. 2-oxobutanoic acid is present on Thr-27. Residues 35–39 (SVKQC) constitute a cross-link (lanthionine (Ser-Cys)). Thr-42 and Thr-46 each carry 2,3-didehydrobutyrine. The beta-methyllanthionine (Thr-Cys) cross-link spans 50–53 (TVSC). The lanthionine (Ser-Cys) cross-link spans 52-59 (SCKGKNGC).

This sequence belongs to the type A lantibiotic family. Post-translationally, maturation of lantibiotics involves the enzymatic conversion of Thr, and Ser into dehydrated AA and the formation of thioether bonds with cysteine. This is followed by membrane translocation and cleavage of the modified precursor. After proteolysis of the propeptide, the N-terminal 2,3-didehydrobutyrine hydrolyzes to 2-oxobutanoic acid, possibly spontaneously.

Lanthionine-containing peptide antibiotic (lantibiotic) active on Gram-positive bacteria. The bactericidal activity of lantibiotics is based on depolarization of energized bacterial cytoplasmic membranes, initiated by the formation of aqueous transmembrane pores. This Staphylococcus epidermidis protein is Lantibiotic Pep5 (pepA).